The following is a 938-amino-acid chain: Protein NLP3 (938 aa).

2 disordered regions span residues 1–26 and 557–597; these read MEVD…GGGD and LADD…KAEK. The span at 12-26 shows a compositional bias: gly residues; sequence AGEGGGGGIGGGGGD. Residues 580–597 show a composition bias toward basic and acidic residues; sequence SLHKSNKPPERRRGKAEK. The 82-residue stretch at 585–666 folds into the RWP-RK domain; the sequence is NKPPERRRGK…IESVQGSDAA (82 aa). A coiled-coil region spans residues 640-662; it reads SRKINKVNRSLSKLKQVIESVQG. A disordered region spans residues 743 to 769; the sequence is DKASHSRSSSGEGSINSRTSEASCHGS. A compositionally biased stretch (low complexity) spans 748-762; the sequence is SRSSSGEGSINSRTS. The 80-residue stretch at 847 to 926 folds into the PB1 domain; that stretch reads TVTIKASFKE…HVIRLLVSDV (80 aa).

Its subcellular location is the nucleus. In terms of biological role, probable transcription factor. In Oryza sativa subsp. japonica (Rice), this protein is Protein NLP3 (NLP3).